Consider the following 437-residue polypeptide: Adenosylhomocysteinase (437 aa).

Substrate-binding residues include Thr-54, Asp-130, and Glu-155. 156–158 contacts NAD(+); the sequence is TTT. Residues Lys-185 and Asp-189 each contribute to the substrate site. NAD(+)-binding positions include Asn-190, 219–224, Glu-242, Asn-277, 298–300, and Asn-345; these read GYGDVG and IGH.

This sequence belongs to the adenosylhomocysteinase family. Homotetramer. It depends on NAD(+) as a cofactor.

The protein resides in the cytoplasm. It catalyses the reaction S-adenosyl-L-homocysteine + H2O = L-homocysteine + adenosine. It functions in the pathway amino-acid biosynthesis; L-homocysteine biosynthesis; L-homocysteine from S-adenosyl-L-homocysteine: step 1/1. In terms of biological role, adenosylhomocysteine is a competitive inhibitor of S-adenosyl-L-methionine-dependent methyl transferase reactions; therefore adenosylhomocysteinase may play a key role in the control of methylations via regulation of the intracellular concentration of adenosylhomocysteine. The protein is Adenosylhomocysteinase of Leishmania donovani.